The following is a 37-amino-acid chain: Tick defensin 2 (37 aa).

3 disulfides stabilise this stretch: cysteine 4–cysteine 26, cysteine 11–cysteine 34, and cysteine 15–cysteine 36.

Belongs to the invertebrate defensin family.

The protein resides in the secreted. Functionally, antibacterial peptide mostly active against Gram-positive bacteria (MIC=0.24 ug/ml on Bacillus subtilis, and MIC=0.94 ug/ml on Micrococcus luteus, MIC&gt;120 ug/ml on both Escherichia coli and Pseudomonas aeruginosa). This chain is Tick defensin 2, found in Ornithodoros savignyi (African eyed tampan).